A 447-amino-acid polypeptide reads, in one-letter code: MGWIPCPCWGTNDDENAGEVADRDPVLLVSGIGGSILHSKKKNSKSEIRVWVRIFLANLAFKQSLWSLYNPKTGYTEPLDDNIEVLVPDDDHGLYAIDILDPSWFVKLCHLTEVYHFHDMIEMLVGCGYKKGTTLFGYGYDFRQSNRIDLLILGLKKKLETAYKRSGGRKVTIISHSMGGLMVSCFMYLHPEAFSKYVNKWITIATPFQGAPGCINDSILTGVQFVEGLESFFFVSRWTMHQLLVECPSIYEMMANPDFKWKKQPEIRVWRKKSENDVDTSVELESFGLIESIDLFNDALKNNELSYGGNKIALPFNFAILDWAAKTREILNKAQLPDGVSFYNIYGVSLNTPFDVCYGTETSPIDDLSEICQTMPEYTYVDGDGTVPAESAAAAQFKAVASVGVSGSHRGLLRDERVFELIQQWLGVEPKKAKRKHLRTHKVVDSG.

Serine 177 acts as the Acyl-ester intermediate in catalysis. Catalysis depends on charge relay system residues aspartate 384 and histidine 409.

It belongs to the AB hydrolase superfamily. Lipase family.

The protein localises to the microsome membrane. It carries out the reaction a 1,2-diacyl-sn-glycero-3-phosphocholine + H2O = a 2-acyl-sn-glycero-3-phosphocholine + a fatty acid + H(+). Hydrolyzes the sn-1 acylester bond of phospholipids. Phosphatidylcholine, phosphatidylethanolamine and phosphatidic acid can be used as substrates. Weak activity with lysophosphatidylcholine and no activity with tripalmitoylglycerol and cholesteryl oleate. Seems to have a preference for unsaturated fatty acids at the sn-1 position. The sequence is that of Phospholipase A(1) LCAT3 (LCAT3) from Arabidopsis thaliana (Mouse-ear cress).